Here is a 101-residue protein sequence, read N- to C-terminus: MKPNFSKGLLPAIVIEEGTKEVLMLAYMNEEAYEKTLKTKRTWFYSRSRRSLWNKGETSGNVQHVQSLYLDCDQDAIVVVVKQVGPACHTGEKTCFHYKII.

Residue Asp-71 coordinates Mg(2+). Cys-72 provides a ligand contact to Zn(2+). Residues Asp-73 and Asp-75 each contribute to the Mg(2+) site. 2 residues coordinate Zn(2+): Cys-88 and Cys-95.

Belongs to the PRA-CH family. In terms of assembly, homodimer. The cofactor is Mg(2+). Zn(2+) serves as cofactor.

It localises to the cytoplasm. The enzyme catalyses 1-(5-phospho-beta-D-ribosyl)-5'-AMP + H2O = 1-(5-phospho-beta-D-ribosyl)-5-[(5-phospho-beta-D-ribosylamino)methylideneamino]imidazole-4-carboxamide. It participates in amino-acid biosynthesis; L-histidine biosynthesis; L-histidine from 5-phospho-alpha-D-ribose 1-diphosphate: step 3/9. In terms of biological role, catalyzes the hydrolysis of the adenine ring of phosphoribosyl-AMP. This is Phosphoribosyl-AMP cyclohydrolase from Bacillus cereus (strain AH187).